The following is a 582-amino-acid chain: 2-succinyl-5-enolpyruvyl-6-hydroxy-3-cyclohexene-1-carboxylate synthase (582 aa).

The protein belongs to the TPP enzyme family. MenD subfamily. Homodimer. Mg(2+) serves as cofactor. Mn(2+) is required as a cofactor. The cofactor is thiamine diphosphate.

It carries out the reaction isochorismate + 2-oxoglutarate + H(+) = 5-enolpyruvoyl-6-hydroxy-2-succinyl-cyclohex-3-ene-1-carboxylate + CO2. Its pathway is quinol/quinone metabolism; 1,4-dihydroxy-2-naphthoate biosynthesis; 1,4-dihydroxy-2-naphthoate from chorismate: step 2/7. It functions in the pathway cofactor biosynthesis; phylloquinone biosynthesis. Catalyzes the thiamine diphosphate-dependent decarboxylation of 2-oxoglutarate and the subsequent addition of the resulting succinic semialdehyde-thiamine pyrophosphate anion to isochorismate to yield 2-succinyl-5-enolpyruvyl-6-hydroxy-3-cyclohexene-1-carboxylate (SEPHCHC). The polypeptide is 2-succinyl-5-enolpyruvyl-6-hydroxy-3-cyclohexene-1-carboxylate synthase (Prochlorococcus marinus (strain MIT 9303)).